The primary structure comprises 334 residues: Putative binding protein YtlA (334 aa).

Positions 1–23 (MNRWLRLGFACVGSIFLMFALAA) are cleaved as a signal peptide. The N-palmitoyl cysteine moiety is linked to residue C24. C24 carries S-diacylglycerol cysteine lipidation.

The protein belongs to the bacterial solute-binding protein SsuA/TauA family.

It is found in the cell membrane. The polypeptide is Putative binding protein YtlA (ytlA) (Bacillus subtilis (strain 168)).